Consider the following 277-residue polypeptide: Probable endonuclease 4 (277 aa).

Residues His-69, His-109, Glu-145, Asp-179, His-182, His-214, Asp-227, His-229, and Glu-259 each contribute to the Zn(2+) site.

Belongs to the AP endonuclease 2 family. The cofactor is Zn(2+).

The catalysed reaction is Endonucleolytic cleavage to 5'-phosphooligonucleotide end-products.. In terms of biological role, endonuclease IV plays a role in DNA repair. It cleaves phosphodiester bonds at apurinic or apyrimidinic (AP) sites, generating a 3'-hydroxyl group and a 5'-terminal sugar phosphate. The polypeptide is Probable endonuclease 4 (Bacteroides thetaiotaomicron (strain ATCC 29148 / DSM 2079 / JCM 5827 / CCUG 10774 / NCTC 10582 / VPI-5482 / E50)).